Here is a 100-residue protein sequence, read N- to C-terminus: Signal recognition particle 19 kDa protein (100 aa).

This sequence belongs to the SRP19 family. In terms of assembly, part of the signal recognition particle protein translocation system, which is composed of SRP and FtsY. Archaeal SRP consists of a 7S RNA molecule of 300 nucleotides and two protein subunits: SRP54 and SRP19.

It is found in the cytoplasm. Functionally, involved in targeting and insertion of nascent membrane proteins into the cytoplasmic membrane. Binds directly to 7S RNA and mediates binding of the 54 kDa subunit of the SRP. In Caldivirga maquilingensis (strain ATCC 700844 / DSM 13496 / JCM 10307 / IC-167), this protein is Signal recognition particle 19 kDa protein.